Here is a 256-residue protein sequence, read N- to C-terminus: Alcohol dehydrogenase (256 aa).

12–41 (FVAGLGGIGLDTTKELLKRDLKNLVILDRI) contacts NAD(+). Ser140 serves as a coordination point for substrate. Catalysis depends on Tyr153, which acts as the Proton acceptor.

The protein belongs to the short-chain dehydrogenases/reductases (SDR) family. In terms of assembly, homodimer.

It carries out the reaction a primary alcohol + NAD(+) = an aldehyde + NADH + H(+). The catalysed reaction is a secondary alcohol + NAD(+) = a ketone + NADH + H(+). The sequence is that of Alcohol dehydrogenase from Drosophila ananassae (Fruit fly).